A 180-amino-acid polypeptide reads, in one-letter code: uncharacterized protein (180 aa).

The Nudix hydrolase domain occupies 35–163; the sequence is LRHRATYIVV…TPDSLKALAL (129 aa). The Nudix box signature appears at 72–94; it reads GGVVQADEQLLESARREAEEELG. Positions 88 and 92 each coordinate Mg(2+).

It belongs to the Nudix hydrolase family. Requires Mg(2+) as cofactor.

This is an uncharacterized protein from Shigella flexneri.